The sequence spans 374 residues: Histidinol-phosphate aminotransferase (374 aa).

The residue at position 211 (K211) is an N6-(pyridoxal phosphate)lysine. The segment covering 351 to 368 has biased composition (low complexity); sequence GNSSQDSASKSNSSANND. A disordered region spans residues 351 to 374; the sequence is GNSSQDSASKSNSSANNDELNASN.

The protein belongs to the class-II pyridoxal-phosphate-dependent aminotransferase family. Histidinol-phosphate aminotransferase subfamily. In terms of assembly, homodimer. The cofactor is pyridoxal 5'-phosphate.

The catalysed reaction is L-histidinol phosphate + 2-oxoglutarate = 3-(imidazol-4-yl)-2-oxopropyl phosphate + L-glutamate. The protein operates within amino-acid biosynthesis; L-histidine biosynthesis; L-histidine from 5-phospho-alpha-D-ribose 1-diphosphate: step 7/9. This is Histidinol-phosphate aminotransferase from Photobacterium profundum (strain SS9).